The primary structure comprises 886 residues: KH domain-containing protein hrpk-2 (886 aa).

Residues 359-368 show a composition bias toward basic and acidic residues; it reads DNHFYNDKDS. The interval 359–433 is disordered; it reads DNHFYNDKDS…SHRKESACVD (75 aa). Composition is skewed to basic residues over residues 369-388 and 415-425; these read GKHHRHRHRSKNNKKHKKHY and HERKKRQRSSH. 2 KH domains span residues 698 to 761 and 775 to 839; these read KETV…IEKI and PGIF…AYLT.

This is KH domain-containing protein hrpk-2 from Caenorhabditis elegans.